A 1155-amino-acid chain; its full sequence is DNA-directed RNA polymerase subunit beta (1155 aa).

It belongs to the RNA polymerase beta chain family. The RNAP catalytic core consists of 2 alpha, 1 beta, 1 beta' and 1 omega subunit. When a sigma factor is associated with the core the holoenzyme is formed, which can initiate transcription.

The enzyme catalyses RNA(n) + a ribonucleoside 5'-triphosphate = RNA(n+1) + diphosphate. DNA-dependent RNA polymerase catalyzes the transcription of DNA into RNA using the four ribonucleoside triphosphates as substrates. This Borrelia turicatae (strain 91E135) protein is DNA-directed RNA polymerase subunit beta.